Consider the following 246-residue polypeptide: Ribonuclease PH (246 aa).

Phosphate is bound by residues Arg-91 and 129-131; that span reads GTR.

Belongs to the RNase PH family. Homohexameric ring arranged as a trimer of dimers.

The catalysed reaction is tRNA(n+1) + phosphate = tRNA(n) + a ribonucleoside 5'-diphosphate. Its function is as follows. Phosphorolytic 3'-5' exoribonuclease that plays an important role in tRNA 3'-end maturation. Removes nucleotide residues following the 3'-CCA terminus of tRNAs; can also add nucleotides to the ends of RNA molecules by using nucleoside diphosphates as substrates, but this may not be physiologically important. Probably plays a role in initiation of 16S rRNA degradation (leading to ribosome degradation) during starvation. This Paraburkholderia xenovorans (strain LB400) protein is Ribonuclease PH.